The chain runs to 78 residues: Translation initiation factor IF-1, chloroplastic (78 aa).

In terms of domain architecture, S1-like spans 1 to 73 (MASNRELIEM…TKGRIIYRLR (73 aa)).

This sequence belongs to the IF-1 family. Component of the 30S ribosomal translation pre-initiation complex which assembles on the 30S ribosome in the order IF-2 and IF-3, IF-1 and N-formylmethionyl-tRNA(fMet); mRNA recruitment can occur at any time during PIC assembly.

The protein localises to the plastid. Its subcellular location is the chloroplast. One of the essential components for the initiation of protein synthesis. Stabilizes the binding of IF-2 and IF-3 on the 30S subunit to which N-formylmethionyl-tRNA(fMet) subsequently binds. Helps modulate mRNA selection, yielding the 30S pre-initiation complex (PIC). Upon addition of the 50S ribosomal subunit IF-1, IF-2 and IF-3 are released leaving the mature 70S translation initiation complex. The sequence is that of Translation initiation factor IF-1, chloroplastic from Ostreococcus tauri.